The following is a 295-amino-acid chain: Pyridoxal 5'-phosphate synthase subunit PdxS (295 aa).

Residue aspartate 25 coordinates D-ribose 5-phosphate. The active-site Schiff-base intermediate with D-ribose 5-phosphate is lysine 82. D-ribose 5-phosphate is bound at residue glycine 154. A D-glyceraldehyde 3-phosphate-binding site is contributed by arginine 166. D-ribose 5-phosphate contacts are provided by residues glycine 215 and 236–237 (GS).

Belongs to the PdxS/SNZ family. In terms of assembly, in the presence of PdxT, forms a dodecamer of heterodimers.

It catalyses the reaction aldehydo-D-ribose 5-phosphate + D-glyceraldehyde 3-phosphate + L-glutamine = pyridoxal 5'-phosphate + L-glutamate + phosphate + 3 H2O + H(+). It participates in cofactor biosynthesis; pyridoxal 5'-phosphate biosynthesis. Functionally, catalyzes the formation of pyridoxal 5'-phosphate from ribose 5-phosphate (RBP), glyceraldehyde 3-phosphate (G3P) and ammonia. The ammonia is provided by the PdxT subunit. Can also use ribulose 5-phosphate and dihydroxyacetone phosphate as substrates, resulting from enzyme-catalyzed isomerization of RBP and G3P, respectively. The protein is Pyridoxal 5'-phosphate synthase subunit PdxS of Listeria welshimeri serovar 6b (strain ATCC 35897 / DSM 20650 / CCUG 15529 / CIP 8149 / NCTC 11857 / SLCC 5334 / V8).